Consider the following 162-residue polypeptide: Protein mmf1, mitochondrial (162 aa).

It belongs to the RutC family.

It localises to the mitochondrion. The protein resides in the cytoplasm. Functionally, plays a role in the maintenance of mitochondrial DNA. In Schizosaccharomyces pombe (strain 972 / ATCC 24843) (Fission yeast), this protein is Protein mmf1, mitochondrial (mmf1).